Reading from the N-terminus, the 214-residue chain is Putative F-box protein At3g58910 (214 aa).

One can recognise an F-box domain in the interval 1-47; the sequence is MDRVSSLPDELLCHILSFLTTKETALTSLLSKREIIPLIKSVVFPTL.

This Arabidopsis thaliana (Mouse-ear cress) protein is Putative F-box protein At3g58910.